A 255-amino-acid polypeptide reads, in one-letter code: Protein DOG1-like 2 (255 aa).

In terms of domain architecture, DOG1 spans 10-246; the sequence is EKLQKRCYHE…HDRGRVRADV (237 aa).

The polypeptide is Protein DOG1-like 2 (Arabidopsis thaliana (Mouse-ear cress)).